Here is a 529-residue protein sequence, read N- to C-terminus: Neuronal acetylcholine receptor subunit alpha-2 (529 aa).

The first 26 residues, 1-26, serve as a signal peptide directing secretion; it reads MGPSCPVFLSFTKLSLWWLLLTPAGG. The disordered stretch occupies residues 27–56; sequence EEAKRPPPRAPGDPLSSPSPTALPQGGSHT. Topologically, residues 27 to 264 are extracellular; that stretch reads EEAKRPPPRA…VTYAFVIRRL (238 aa). N-linked (GlcNAc...) asparagine glycosylation is found at N79 and N129. The cysteines at positions 183 and 197 are disulfide-linked. An N-linked (GlcNAc...) asparagine glycan is attached at N235. An intrachain disulfide couples C247 to C248. Helical transmembrane passes span 265–289, 297–315, and 331–352; these read PLFYTINLIIPCLLISCLTVLVFYL, ITLCISVLLSLTVFLLLIT, and YLLFTMIFVTLSIVITVFVLNV. The Cytoplasmic portion of the chain corresponds to 353 to 502; sequence HHRSPSTHTM…WKYVAMVIDR (150 aa). A helical membrane pass occupies residues 503–521; the sequence is IFLWLFIIVCFLGTIGLFL.

The protein belongs to the ligand-gated ion channel (TC 1.A.9) family. Acetylcholine receptor (TC 1.A.9.1) subfamily. Alpha-2/CHRNA2 sub-subfamily. In terms of assembly, neuronal AChR is composed of two different types of subunits: alpha and non-alpha (beta). CHRNA2/alpha-2 subunit can be combined to CHRNB2/beta-2 or CHRNB4/beta-4 to give rise to functional receptors. Both CHRNA2:CHRNB2 and CHRNA2:CHRNB4 nAChR complexes are heteropentamers with two subtypes: LS (low agonist sensitivity) with a (CHRNA2)3:(CHRNB2/4)2 and HS (high agonist sensitivity) with a (CHRNA2)2:(CHRNB2/4)3 stoichiometries; the subtypes differ in their subunit binding interfaces which are involved in ligand binding.

The protein localises to the synaptic cell membrane. It is found in the cell membrane. The enzyme catalyses Ca(2+)(in) = Ca(2+)(out). It carries out the reaction K(+)(in) = K(+)(out). It catalyses the reaction Na(+)(in) = Na(+)(out). In terms of biological role, component of neuronal acetylcholine receptors (nAChRs) that function as pentameric, ligand-gated cation channels with high calcium permeability among other activities. nAChRs are excitatory neurotrasnmitter receptors formed by a collection of nAChR subunits known to mediate synaptic transmission in the nervous system and the neuromuscular junction. Each nAchR subunit confers differential attributes to channel properties, including activation, deactivation and desensitization kinetics, pH sensitivity, cation permeability, and binding to allosteric modulators. CHRNA2 forms heteropentameric neuronal acetylcholine receptors with CHRNB2 and CHRNB4 and plays a role in nicotine dependence. The polypeptide is Neuronal acetylcholine receptor subunit alpha-2 (Homo sapiens (Human)).